Reading from the N-terminus, the 265-residue chain is Uridylate kinase (265 aa).

The disordered stretch occupies residues 1-29 (MTESREPHVAGSAAPRPEPANGLASGQPS). ATP is bound at residue 40–43 (KLGG). Residue glycine 81 participates in UMP binding. ATP is bound by residues glycine 82 and arginine 86. UMP contacts are provided by residues aspartate 101 and 162–169 (MGLPYFST). Residues phenylalanine 195 and aspartate 198 each coordinate ATP.

This sequence belongs to the UMP kinase family. In terms of assembly, homohexamer.

Its subcellular location is the cytoplasm. The catalysed reaction is UMP + ATP = UDP + ADP. It functions in the pathway pyrimidine metabolism; CTP biosynthesis via de novo pathway; UDP from UMP (UMPK route): step 1/1. Its activity is regulated as follows. Inhibited by UTP. Catalyzes the reversible phosphorylation of UMP to UDP. The protein is Uridylate kinase of Mycobacterium avium (strain 104).